A 496-amino-acid chain; its full sequence is UDP-glycosyltransferase 73C2 (496 aa).

UDP-alpha-D-glucose contacts are provided by residues S297, 357-359 (SPQ), 374-382 (HCGWNSTLE), and 396-399 (FGDQ).

The protein belongs to the UDP-glycosyltransferase family.

This is UDP-glycosyltransferase 73C2 (UGT73C2) from Arabidopsis thaliana (Mouse-ear cress).